The following is a 197-amino-acid chain: Protein Hikeshi (197 aa).

The tract at residues 18-55 is required for F-X-F-G repeats-nucleoporins recognition and nuclear import; sequence VAEDKFVFDLPDYENINHVVVFMLGTVPFPEGMGGSVY. Residues 124–134 form a flexible linker region involved in nuclear import of HSP70 proteins region; it reads QTPVGNAAVSS.

This sequence belongs to the OPI10 family. In terms of assembly, forms an asymmetric homodimer; required for binding and nuclear import of HSP70 proteins. Interacts with ATP-bound HSP70 proteins. Interacts with NUP62 and NUP153 (via F-X-F-G repeats). Interacts with HSPA8.

It localises to the cytoplasm. The protein localises to the cytosol. The protein resides in the nucleus. In terms of biological role, acts as a specific nuclear import carrier for HSP70 proteins following heat-shock stress: acts by mediating the nucleoporin-dependent translocation of ATP-bound HSP70 proteins into the nucleus. HSP70 proteins import is required to protect cells from heat shock damages. Does not translocate ADP-bound HSP70 proteins into the nucleus. The protein is Protein Hikeshi of Bos taurus (Bovine).